Here is an 89-residue protein sequence, read N- to C-terminus: Dynein light chain 1, cytoplasmic (89 aa).

Belongs to the dynein light chain family. Interacts with spn-F. Forms ternary complexes with spn-F and IKKepsilon. In terms of tissue distribution, ubiquitous.

It localises to the cytoplasm. It is found in the cytoskeleton. Functionally, acts as a non-catalytic accessory component of a dynein complex. The sequence is that of Dynein light chain 1, cytoplasmic (ctp) from Drosophila melanogaster (Fruit fly).